Reading from the N-terminus, the 299-residue chain is uncharacterized protein (299 aa).

Polar residues predominate over residues 1–10 (MTSIIQSPPL). Disordered regions lie at residues 1–30 (MTSI…NNNN), 54–89 (KLNN…INNN), and 148–212 (QDYT…SDYV). Low complexity predominate over residues 56–89 (NNNNNNNNNNNNNNNNNNNNNNNNSSSNNNINNN). Composition is skewed to acidic residues over residues 150–169 (YTDE…DEEE) and 177–212 (ECEE…SDYV).

This is an uncharacterized protein from Dictyostelium discoideum (Social amoeba).